We begin with the raw amino-acid sequence, 387 residues long: Succinate--CoA ligase [ADP-forming] subunit beta (387 aa).

The ATP-grasp domain occupies 9 to 245 (KDLLESYGLK…KSQENAKELK (237 aa)). ATP contacts are provided by residues Lys46, 53–55 (GRG), Glu100, Tyr103, and Glu108. Mg(2+) contacts are provided by Asn200 and Asp214. Residues Asn265 and 322–324 (GIV) contribute to the substrate site.

This sequence belongs to the succinate/malate CoA ligase beta subunit family. In terms of assembly, heterotetramer of two alpha and two beta subunits. Mg(2+) serves as cofactor.

It carries out the reaction succinate + ATP + CoA = succinyl-CoA + ADP + phosphate. The catalysed reaction is GTP + succinate + CoA = succinyl-CoA + GDP + phosphate. The protein operates within carbohydrate metabolism; tricarboxylic acid cycle; succinate from succinyl-CoA (ligase route): step 1/1. In terms of biological role, succinyl-CoA synthetase functions in the citric acid cycle (TCA), coupling the hydrolysis of succinyl-CoA to the synthesis of either ATP or GTP and thus represents the only step of substrate-level phosphorylation in the TCA. The beta subunit provides nucleotide specificity of the enzyme and binds the substrate succinate, while the binding sites for coenzyme A and phosphate are found in the alpha subunit. The polypeptide is Succinate--CoA ligase [ADP-forming] subunit beta (Francisella tularensis subsp. novicida (strain U112)).